Reading from the N-terminus, the 398-residue chain is O-methyltransferase mpaG (398 aa).

S-adenosyl-L-methionine is bound at residue aspartate 264. Histidine 306 (proton acceptor) is an active-site residue. Active-site residues include glutamate 335 and glutamate 362.

Belongs to the class I-like SAM-binding methyltransferase superfamily. Cation-independent O-methyltransferase family. COMT subfamily.

It localises to the cytoplasm. The protein localises to the cytosol. It carries out the reaction (4E,8E)-10-(4,6-dihydroxy-7-methyl-3-oxo-1,3-dihydro-2-benzofuran-5-yl)-4,8-dimethyldeca-4,8-dienoate + S-adenosyl-L-methionine = (4E,8E)-10-(4-hydroxy-6-methoxy-7-methyl-3-oxo-1,3-dihydro-2-benzofuran-5-yl)-4,8-dimethyldeca-4,8-dienoate + S-adenosyl-L-homocysteine + H(+). It participates in secondary metabolite biosynthesis; terpenoid biosynthesis. Its function is as follows. O-methyltransferase; part of the gene cluster that mediates the biosynthesis of mycophenolic acid (MPA), the first isolated antibiotic natural product in the world obtained from a culture of Penicillium brevicompactum in 1893. MpaC methylates farnesyl-DHMP-3C (FDHMP-3C) to yield MFDHMP-3C. The first step of the pathway is the synthesis of 5-methylorsellinic acid (5MOA) by the cytosolic polyketide synthase mpaC. 5MOA is then converted to the phthalide compound 5,7-dihydroxy-4,6-dimethylphthalide (DHMP) by the endoplasmic reticulum-bound cytochrome P450 monooxygenase mpaDE. MpaDE first catalyzes hydroxylation of 5-MOA to 4,6-dihydroxy-2-(hydroxymethyl)-3-methylbenzoic acid (DHMB). MpaDE then acts as a lactone synthase that catalyzes the ring closure to convert DHMB into DHMP. The next step is the prenylation of DHMP by the Golgi apparatus-associated prenyltransferase mpaA to yield farnesyl-DHMP (FDHMP). The ER-bound oxygenase mpaB then mediates the oxidative cleavage the C19-C20 double bond in FDHMP to yield FDHMP-3C via a mycophenolic aldehyde intermediate. The O-methyltransferase mpaG catalyzes the methylation of FDHMP-3C to yield MFDHMP-3C. After the cytosolic methylation of FDHMP-3C, MFDHMP-3C enters into peroxisomes probably via free diffusion due to its low molecular weight. Upon a peroxisomal CoA ligation reaction, catalyzed by a beta-oxidation component enzyme acyl-CoA ligase ACL891, MFDHMP-3C-CoA would then be restricted to peroxisomes for the following beta-oxidation pathway steps. The peroxisomal beta-oxidation machinery than converts MFDHMP-3C-CoA into MPA_CoA, via a beta-oxidation chain-shortening process. Finally mpaH acts as a peroxisomal acyl-CoA hydrolase with high substrate specificity toward MPA-CoA to release the final product MPA. In Penicillium roqueforti (strain FM164), this protein is O-methyltransferase mpaG.